A 788-amino-acid polypeptide reads, in one-letter code: Autophagy-related protein 9 (788 aa).

Topologically, residues 1-171 are cytoplasmic; that stretch reads MTDKSTFLSV…EAYMYYTGKG (171 aa). The span at 32-42 shows a compositional bias: basic and acidic residues; that stretch reads ILRRVEEEHAQ. Residues 32-127 form a disordered region; sequence ILRRVEEEHA…TGVANGGLPR (96 aa). Positions 44-58 are enriched in low complexity; sequence SDNSNSDNDSGNDSD. A compositionally biased stretch (polar residues) spans 101–112; that stretch reads SFAQGTKTQTPI. The chain crosses the membrane as a helical span at residues 172–192; the sequence is LVSIILSRVLNMSTIMFVVVF. At 193–222 the chain is on the lumenal side; it reads STYLGSCIDYSKIKGSRTLDEVHVKQCYAK. The chain crosses the membrane as a helical span at residues 223–243; it reads LGSFHVFVLWTFFVLWFMKLF. Topologically, residues 244–390 are cytoplasmic; sequence QYVKDIRRLV…QILSTGLRRR (147 aa). An intramembrane region is located at residue F391. Topologically, residues 392 to 479 are cytoplasmic; that stretch reads VFAAIMNVVF…PKEKTALVSK (88 aa). A helical transmembrane segment spans residues 480 to 500; the sequence is FVSFIAGSFAAVLGIASLIDP. The Lumenal portion of the chain corresponds to 501 to 512; the sequence is ELFLMFEISANR. Residues 513–533 form a helical membrane-spanning segment; sequence TVLFYIGVFGSILAVSRSLIP. The Cytoplasmic segment spans residues 534 to 579; that stretch reads EETLVFDPEISLRYVAEFTHYLPPEWEGKLHTEQVKNEFSLMYEMR. An intramembrane segment occupies 580–600; that stretch reads LIILLKELASIFLAPFILYYS. Topologically, residues 601–788 are cytoplasmic; the sequence is LTQSCDDIVD…KKTDNMNLGA (188 aa). A disordered region spans residues 715-736; it reads LSPAAPTATTATSGTATGAAPR. Positions 716-734 are enriched in low complexity; sequence SPAAPTATTATSGTATGAA.

Belongs to the ATG9 family. As to quaternary structure, homotrimer; forms a homotrimer with a central pore that forms a path between the two membrane leaflets. In terms of processing, phosphorylated by ATG1. ATG1 phosphorylation is required for preautophagosome elongation.

It is found in the preautophagosomal structure membrane. The protein localises to the cytoplasmic vesicle membrane. Its subcellular location is the golgi apparatus membrane. The protein resides in the endoplasmic reticulum membrane. It catalyses the reaction a 1,2-diacyl-sn-glycero-3-phosphocholine(in) = a 1,2-diacyl-sn-glycero-3-phosphocholine(out). It carries out the reaction a 1,2-diacyl-sn-glycero-3-phospho-L-serine(in) = a 1,2-diacyl-sn-glycero-3-phospho-L-serine(out). The catalysed reaction is a 1,2-diacyl-sn-glycero-3-phosphoethanolamine(in) = a 1,2-diacyl-sn-glycero-3-phosphoethanolamine(out). The enzyme catalyses a 1,2-diacyl-sn-glycero-3-phospho-(1D-myo-inositol-3-phosphate)(in) = a 1,2-diacyl-sn-glycero-3-phospho-(1D-myo-inositol-3-phosphate)(out). Phospholipid scramblase involved in autophagy and cytoplasm to vacuole transport (Cvt) vesicle formation. Cycles between the preautophagosomal structure/phagophore assembly site (PAS) and the cytoplasmic vesicle pool and supplies membrane for the growing autophagosome. Lipid scramblase activity plays a key role in preautophagosomal structure/phagophore assembly by distributing the phospholipids that arrive through ATG2 from the cytoplasmic to the luminal leaflet of the bilayer, thereby driving autophagosomal membrane expansion. Required for mitophagy. Also involved in endoplasmic reticulum-specific autophagic process and is essential for the survival of cells subjected to severe ER stress. Different machineries are required for anterograde trafficking to the PAS during either the Cvt pathway or bulk autophagy and for retrograde trafficking. The protein is Autophagy-related protein 9 of Yarrowia lipolytica (strain CLIB 122 / E 150) (Yeast).